Reading from the N-terminus, the 164-residue chain is Transcription elongation factor GreA (164 aa).

A coiled-coil region spans residues 50–75 (YHAAREEQGQQEARIRQLQDLLNIAK).

This sequence belongs to the GreA/GreB family.

In terms of biological role, necessary for efficient RNA polymerase transcription elongation past template-encoded arresting sites. The arresting sites in DNA have the property of trapping a certain fraction of elongating RNA polymerases that pass through, resulting in locked ternary complexes. Cleavage of the nascent transcript by cleavage factors such as GreA or GreB allows the resumption of elongation from the new 3'terminus. GreA releases sequences of 2 to 3 nucleotides. The chain is Transcription elongation factor GreA from Mycobacterium leprae (strain Br4923).